The primary structure comprises 289 residues: 4-hydroxybenzoate octaprenyltransferase (289 aa).

Helical transmembrane passes span 23–43 (IGAL…TPGV), 46–66 (LWIL…GCVV), 99–119 (LFVV…TMTI), 141–161 (LPQV…FAAV), 163–183 (ESVP…AVAY), 213–233 (LIIG…GWLN), 234–254 (GLGW…VYQQ), and 268–288 (AFMN…MSYV).

It belongs to the UbiA prenyltransferase family. It depends on Mg(2+) as a cofactor.

The protein resides in the cell inner membrane. It catalyses the reaction all-trans-octaprenyl diphosphate + 4-hydroxybenzoate = 4-hydroxy-3-(all-trans-octaprenyl)benzoate + diphosphate. It functions in the pathway cofactor biosynthesis; ubiquinone biosynthesis. Its function is as follows. Catalyzes the prenylation of para-hydroxybenzoate (PHB) with an all-trans polyprenyl group. Mediates the second step in the final reaction sequence of ubiquinone-8 (UQ-8) biosynthesis, which is the condensation of the polyisoprenoid side chain with PHB, generating the first membrane-bound Q intermediate 3-octaprenyl-4-hydroxybenzoate. The protein is 4-hydroxybenzoate octaprenyltransferase of Citrobacter koseri (strain ATCC BAA-895 / CDC 4225-83 / SGSC4696).